Reading from the N-terminus, the 155-residue chain is SsrA-binding protein (155 aa).

This sequence belongs to the SmpB family.

It is found in the cytoplasm. In terms of biological role, required for rescue of stalled ribosomes mediated by trans-translation. Binds to transfer-messenger RNA (tmRNA), required for stable association of tmRNA with ribosomes. tmRNA and SmpB together mimic tRNA shape, replacing the anticodon stem-loop with SmpB. tmRNA is encoded by the ssrA gene; the 2 termini fold to resemble tRNA(Ala) and it encodes a 'tag peptide', a short internal open reading frame. During trans-translation Ala-aminoacylated tmRNA acts like a tRNA, entering the A-site of stalled ribosomes, displacing the stalled mRNA. The ribosome then switches to translate the ORF on the tmRNA; the nascent peptide is terminated with the 'tag peptide' encoded by the tmRNA and targeted for degradation. The ribosome is freed to recommence translation, which seems to be the essential function of trans-translation. The protein is SsrA-binding protein of Streptococcus pneumoniae serotype 4 (strain ATCC BAA-334 / TIGR4).